A 341-amino-acid chain; its full sequence is 4-hydroxy-2-oxovalerate aldolase 2 (341 aa).

The Pyruvate carboxyltransferase domain maps to 8 to 260 (VTVHDMTLRD…ETGVDVAKIT (253 aa)). A substrate-binding site is contributed by 16–17 (RD). Asp17 provides a ligand contact to Mn(2+). His20 serves as the catalytic Proton acceptor. Residues Ser170 and His199 each coordinate substrate. Positions 199 and 201 each coordinate Mn(2+). Tyr290 is a substrate binding site.

It belongs to the 4-hydroxy-2-oxovalerate aldolase family.

It carries out the reaction (S)-4-hydroxy-2-oxopentanoate = acetaldehyde + pyruvate. In Dechloromonas aromatica (strain RCB), this protein is 4-hydroxy-2-oxovalerate aldolase 2.